The primary structure comprises 559 residues: Potassium-transporting ATPase potassium-binding subunit (559 aa).

13 consecutive transmembrane segments (helical) span residues 5 to 25 (GFLLIASFLLILLVLAKPLGS), 27 to 47 (LARLIAAVPLPGVAGIERILW), 63 to 83 (LLALLTLNLLGLGILFCLLFW), 132 to 152 (GLTVQNFLSAATGIAVVFALI), 170 to 190 (LVRITLWILFPVALIIALFFI), 253 to 273 (LAQMLAIFLIPAALCFAFGEA), 283 to 303 (LLWAMSFIFVVCVAVVMWAEV), 327 to 347 (FGVLASSLFAVVTTAASCGAV), 356 to 376 (ALGGMVPMWLMQIGEVVFGGV), 379 to 399 (GLYGMLLFVLLAVFIAGLMIG), 416 to 436 (MTALAILVTPMLVLLGSALAM), 484 to 504 (LLAFCMFVGRFGVIIPVMAIA), and 524 to 544 (GALFIGLLIGTVLLVGALTFI).

Belongs to the KdpA family. The system is composed of three essential subunits: KdpA, KdpB and KdpC.

The protein localises to the cell inner membrane. Functionally, part of the high-affinity ATP-driven potassium transport (or Kdp) system, which catalyzes the hydrolysis of ATP coupled with the electrogenic transport of potassium into the cytoplasm. This subunit binds the periplasmic potassium ions and delivers the ions to the membrane domain of KdpB through an intramembrane tunnel. This chain is Potassium-transporting ATPase potassium-binding subunit, found in Salmonella heidelberg (strain SL476).